The chain runs to 742 residues: Phosphoribosylformylglycinamidine synthase subunit PurL (742 aa).

H54 is a catalytic residue. Positions 57 and 96 each coordinate ATP. Residue E98 coordinates Mg(2+). Residues S99–H102 and R121 contribute to the substrate site. Residue H100 is the Proton acceptor of the active site. Residue D122 participates in Mg(2+) binding. A substrate-binding site is contributed by Q245. D273 contributes to the Mg(2+) binding site. E317 to Q319 contributes to the substrate binding site. Positions 500 and 537 each coordinate ATP. N538 provides a ligand contact to Mg(2+). S540 contacts substrate.

It belongs to the FGAMS family. In terms of assembly, monomer. Part of the FGAM synthase complex composed of 1 PurL, 1 PurQ and 2 PurS subunits.

The protein localises to the cytoplasm. It catalyses the reaction N(2)-formyl-N(1)-(5-phospho-beta-D-ribosyl)glycinamide + L-glutamine + ATP + H2O = 2-formamido-N(1)-(5-O-phospho-beta-D-ribosyl)acetamidine + L-glutamate + ADP + phosphate + H(+). The protein operates within purine metabolism; IMP biosynthesis via de novo pathway; 5-amino-1-(5-phospho-D-ribosyl)imidazole from N(2)-formyl-N(1)-(5-phospho-D-ribosyl)glycinamide: step 1/2. Part of the phosphoribosylformylglycinamidine synthase complex involved in the purines biosynthetic pathway. Catalyzes the ATP-dependent conversion of formylglycinamide ribonucleotide (FGAR) and glutamine to yield formylglycinamidine ribonucleotide (FGAM) and glutamate. The FGAM synthase complex is composed of three subunits. PurQ produces an ammonia molecule by converting glutamine to glutamate. PurL transfers the ammonia molecule to FGAR to form FGAM in an ATP-dependent manner. PurS interacts with PurQ and PurL and is thought to assist in the transfer of the ammonia molecule from PurQ to PurL. In Geobacillus kaustophilus (strain HTA426), this protein is Phosphoribosylformylglycinamidine synthase subunit PurL.